The sequence spans 169 residues: uncharacterized protein (169 aa).

The next 3 helical transmembrane spans lie at 25–45 (ALMG…MSYF), 57–77 (FFWV…FGVF), and 91–111 (LFLI…FLMV).

Belongs to the major facilitator superfamily. Allantoate permease family.

It is found in the membrane. This is an uncharacterized protein from Saccharomyces cerevisiae (strain ATCC 204508 / S288c) (Baker's yeast).